Here is a 417-residue protein sequence, read N- to C-terminus: Ribonucleoside-diphosphate reductase small chain (417 aa).

Fe cation-binding residues include Asp-168, Glu-199, and His-202. Tyr-206 is an active-site residue. Fe cation contacts are provided by Glu-261, Glu-297, and His-300.

It belongs to the ribonucleoside diphosphate reductase small chain family. As to quaternary structure, heterotetramer composed of a homodimer of the large subunit (R1) and a homodimer of the small subunit (R2). Larger multisubunit protein complex are also active, composed of (R1)n(R2)n. Fe cation serves as cofactor.

The catalysed reaction is a 2'-deoxyribonucleoside 5'-diphosphate + [thioredoxin]-disulfide + H2O = a ribonucleoside 5'-diphosphate + [thioredoxin]-dithiol. In terms of biological role, ribonucleoside-diphosphate reductase holoenzyme provides the precursors necessary for viral DNA synthesis. Allows virus growth in non-dividing cells. Catalyzes the biosynthesis of deoxyribonucleotides from the corresponding ribonucleotides. The sequence is that of Ribonucleoside-diphosphate reductase small chain (RNR2) from Acanthamoeba polyphaga mimivirus (APMV).